We begin with the raw amino-acid sequence, 211 residues long: Beta-crystallin B3 (211 aa).

A disordered region spans residues 1 to 21; sequence MTEQQSPPEQMVTGEGAGERG. The tract at residues 1-23 is N-terminal arm; the sequence is MTEQQSPPEQMVTGEGAGERGGN. 2 consecutive Beta/gamma crystallin 'Greek key' domains span residues 24 to 63 and 64 to 108; these read YKIT…QVES and GPWL…RPLQ. A connecting peptide region spans residues 109 to 113; it reads IDSPD. Beta/gamma crystallin 'Greek key' domains lie at 114–155 and 156–198; these read HKIH…RALN and GTWV…RRVR. The interval 200 to 211 is C-terminal arm; sequence QQWHQRGSFENS.

This sequence belongs to the beta/gamma-crystallin family. In terms of assembly, homo/heterodimer, or complexes of higher-order. The structure of beta-crystallin oligomers seems to be stabilized through interactions between the N-terminal arms.

Functionally, crystallins are the dominant structural components of the vertebrate eye lens. In Gallus gallus (Chicken), this protein is Beta-crystallin B3 (CRYBB3).